The primary structure comprises 450 residues: Signal recognition particle 54 kDa protein (450 aa).

GTP is bound by residues 107 to 114 (GIQGSGKT), 188 to 192 (DTAGR), and 247 to 250 (TKLD).

It belongs to the GTP-binding SRP family. SRP54 subfamily. In terms of assembly, part of the signal recognition particle protein translocation system, which is composed of SRP and FtsY. Archaeal SRP consists of a 7S RNA molecule of 300 nucleotides and two protein subunits: SRP54 and SRP19.

The protein localises to the cytoplasm. The enzyme catalyses GTP + H2O = GDP + phosphate + H(+). In terms of biological role, involved in targeting and insertion of nascent membrane proteins into the cytoplasmic membrane. Binds to the hydrophobic signal sequence of the ribosome-nascent chain (RNC) as it emerges from the ribosomes. The SRP-RNC complex is then targeted to the cytoplasmic membrane where it interacts with the SRP receptor FtsY. The chain is Signal recognition particle 54 kDa protein from Methanococcus vannielii (strain ATCC 35089 / DSM 1224 / JCM 13029 / OCM 148 / SB).